The primary structure comprises 211 residues: Type II secretion system protein J (211 aa).

Positions 1–7 are cleaved as a propeptide — leader sequence; that stretch reads MRPRAAG. The residue at position 8 (F8) is an N-methylphenylalanine. A helical membrane pass occupies residues 8 to 28; sequence FTLIEVLLATMLLVGGLALAF.

It belongs to the GSP J family.

Its subcellular location is the membrane. Its function is as follows. Involved in a type II secretion system (T2SS, formerly general secretion pathway, GSP) for the export of proteins. This Xanthomonas campestris pv. campestris (strain ATCC 33913 / DSM 3586 / NCPPB 528 / LMG 568 / P 25) protein is Type II secretion system protein J (xpsJ).